The following is a 391-amino-acid chain: Anhydro-N-acetylmuramic acid kinase (391 aa).

Gly9 to Glu16 serves as a coordination point for ATP.

It belongs to the anhydro-N-acetylmuramic acid kinase family.

The catalysed reaction is 1,6-anhydro-N-acetyl-beta-muramate + ATP + H2O = N-acetyl-D-muramate 6-phosphate + ADP + H(+). Its pathway is amino-sugar metabolism; 1,6-anhydro-N-acetylmuramate degradation. The protein operates within cell wall biogenesis; peptidoglycan recycling. Catalyzes the specific phosphorylation of 1,6-anhydro-N-acetylmuramic acid (anhMurNAc) with the simultaneous cleavage of the 1,6-anhydro ring, generating MurNAc-6-P. Is required for the utilization of anhMurNAc either imported from the medium or derived from its own cell wall murein, and thus plays a role in cell wall recycling. The protein is Anhydro-N-acetylmuramic acid kinase of Streptomyces coelicolor (strain ATCC BAA-471 / A3(2) / M145).